Consider the following 144-residue polypeptide: Putative RNase YutE (144 aa).

The active site involves Arg96. The RX(4)HXY motif signature appears at 96–103 (RKTLVQQY).

It belongs to the HepT RNase toxin family. As to quaternary structure, homodimer, probably forms a complex with cognate antitoxin YutD.

Probable toxic component of a putative type VII toxin-antitoxin (TA) system, probably an RNase. Probably neutralized by cognate antitoxin YutD. The polypeptide is Putative RNase YutE (yutE) (Bacillus subtilis (strain 168)).